The following is a 203-amino-acid chain: Outer-membrane lipoprotein LolB (203 aa).

The first 21 residues, 1–21, serve as a signal peptide directing secretion; that stretch reads MTGRWSPRLLAGLLAALVLSG. Cys22 carries N-palmitoyl cysteine lipidation. Cys22 is lipidated: S-diacylglycerol cysteine.

It belongs to the LolB family. Monomer.

It is found in the cell outer membrane. Its function is as follows. Plays a critical role in the incorporation of lipoproteins in the outer membrane after they are released by the LolA protein. This Halorhodospira halophila (strain DSM 244 / SL1) (Ectothiorhodospira halophila (strain DSM 244 / SL1)) protein is Outer-membrane lipoprotein LolB.